We begin with the raw amino-acid sequence, 397 residues long: Fractalkine (397 aa).

Residues 1 to 24 (MAPISLSWLLRLATFCHLTVLLAG) form the signal peptide. Positions 25 to 100 (QHHGVTKCNI…RQAAALTRNG (76 aa)) are chemokine and involved in interaction with ITGAV:ITGB3 and ITGA4:ITGB1. The Extracellular portion of the chain corresponds to 25-341 (QHHGVTKCNI…PDAQAATRRQ (317 aa)). Cystine bridges form between C32-C58 and C36-C74. The N-linked (GlcNAc...) asparagine glycan is linked to N33. The tract at residues 101 to 341 (GTFEKQIGEV…PDAQAATRRQ (241 aa)) is mucin-like stalk. 2 disordered regions span residues 128 to 265 (EPEA…REEM) and 289 to 309 (VPVS…SWTP). A compositionally biased stretch (polar residues) spans 133–147 (GESSSLEPTPSSQEA). O-linked (GalNAc...) threonine glycosylation occurs at T183. Residues 193–202 (TAATWQSSAP) are compositionally biased toward polar residues. Low complexity predominate over residues 219-243 (PSTQDPSTQASTASSPAPEENAPSE). S253 is a glycosylation site (O-linked (GalNAc...) serine). Residue T329 is glycosylated (O-linked (GalNAc...) threonine). Residues 342–362 (AVGLLAFLGLLFCLGVAMFTY) traverse the membrane as a helical segment. Topologically, residues 363 to 397 (QSLQGCPRKMAGEMAEGLRYIPRSCGSNSYVLVPV) are cytoplasmic.

Belongs to the intercrine delta family. As to quaternary structure, monomer. Forms a ternary complex with CX3CR1 and ITGAV:ITGB3 or ITGA4:ITGB1. In terms of assembly, (Microbial infection) Interacts with pox virus crmD; this inhibits cell migration mediated by CX3CL1. (Microbial infection) Interacts (via N-terminus) with human cytomegalovirus (HHV-5) US28. As to quaternary structure, (Microbial infection) Interacts with P.falciparum (strain 3D7) CBP1 and CBP2 (via their extracellular domains); the interaction mediates the adhesion of infected erythrocytes with endothelial cells. A soluble short 95 kDa form may be released by proteolytic cleavage from the long membrane-anchored form. In terms of processing, O-glycosylated with core 1 or possibly core 8 glycans. In terms of tissue distribution, expressed in the seminal plasma, endometrial fluid and follicular fluid (at protein level). Small intestine, colon, testis, prostate, heart, brain, lung, skeletal muscle, kidney and pancreas. Most abundant in the brain and heart.

It localises to the cell membrane. The protein localises to the secreted. Chemokine that acts as a ligand for both CX3CR1 and integrins ITGAV:ITGB3 and ITGA4:ITGB1. The CX3CR1-CX3CL1 signaling exerts distinct functions in different tissue compartments, such as immune response, inflammation, cell adhesion and chemotaxis. Regulates leukocyte adhesion and migration processes at the endothelium. Can activate integrins in both a CX3CR1-dependent and CX3CR1-independent manner. In the presence of CX3CR1, activates integrins by binding to the classical ligand-binding site (site 1) in integrins. In the absence of CX3CR1, binds to a second site (site 2) in integrins which is distinct from site 1 and enhances the binding of other integrin ligands to site 1. In terms of biological role, the soluble form is chemotactic for T-cells and monocytes, but not for neutrophils. Functionally, the membrane-bound form promotes adhesion of those leukocytes to endothelial cells. Its function is as follows. (Microbial infection) Mediates the cytoadherence of erythrocytes infected with parasite P.falciparum (strain 3D7) with endothelial cells by interacting with P.falciparum CBP1 and CBP2 expressed at the surface of erythrocytes. The adhesion prevents the elimination of infected erythrocytes by the spleen. The chain is Fractalkine from Homo sapiens (Human).